A 122-amino-acid polypeptide reads, in one-letter code: Ribonuclease P protein component (122 aa).

The protein belongs to the RnpA family. In terms of assembly, consists of a catalytic RNA component (M1 or rnpB) and a protein subunit.

The enzyme catalyses Endonucleolytic cleavage of RNA, removing 5'-extranucleotides from tRNA precursor.. Its function is as follows. RNaseP catalyzes the removal of the 5'-leader sequence from pre-tRNA to produce the mature 5'-terminus. It can also cleave other RNA substrates such as 4.5S RNA. The protein component plays an auxiliary but essential role in vivo by binding to the 5'-leader sequence and broadening the substrate specificity of the ribozyme. This Lactobacillus helveticus (strain DPC 4571) protein is Ribonuclease P protein component.